Here is a 912-residue protein sequence, read N- to C-terminus: Protein transport protein SEC24-2 (912 aa).

Over residues 1–11 the composition is skewed to basic residues; sequence MSNPSRPKKRV. 2 disordered regions span residues 1 to 83 and 102 to 129; these read MSNP…QQIS and PNAY…PGRP. Composition is skewed to polar residues over residues 33-45, 53-74, and 106-129; these read SGQT…SGSA, GQFT…MTPA, and YQPN…PGRP. Zn(2+) contacts are provided by cysteine 226, cysteine 229, cysteine 248, and cysteine 251. Residues 226–251 form a zinc finger-like region; that stretch reads CRRCRGYLNPFVKILQVESKWRCNFC.

This sequence belongs to the SEC23/SEC24 family. SEC24 subfamily. In terms of assembly, the COPII coat is composed of at least 5 proteins: the SEC23/24 complex, the SEC13/31 complex, and the protein SAR1. Golgi apparatus membrane; Peripheral membrane protein; Cytoplasmic side.

It is found in the cytoplasm. Its subcellular location is the cytoplasmic vesicle. It localises to the COPII-coated vesicle membrane. The protein resides in the endoplasmic reticulum membrane. The protein localises to the golgi apparatus membrane. Its function is as follows. Component of the coat protein complex II (COPII) which promotes the formation of transport vesicles from the endoplasmic reticulum (ER). The coat has two main functions, the physical deformation of the endoplasmic reticulum membrane into vesicles and the selection of cargo molecules. The sequence is that of Protein transport protein SEC24-2 (SEC242) from Naumovozyma castellii (Yeast).